A 173-amino-acid polypeptide reads, in one-letter code: Ribosome maturation factor RimM (173 aa).

The 80-residue stretch at 94–173 folds into the PRC barrel domain; that stretch reads EGEFYWRDLI…TIEVDWDPGF (80 aa).

It belongs to the RimM family. As to quaternary structure, binds ribosomal protein uS19.

Its subcellular location is the cytoplasm. An accessory protein needed during the final step in the assembly of 30S ribosomal subunit, possibly for assembly of the head region. Essential for efficient processing of 16S rRNA. May be needed both before and after RbfA during the maturation of 16S rRNA. It has affinity for free ribosomal 30S subunits but not for 70S ribosomes. This chain is Ribosome maturation factor RimM, found in Aeromonas salmonicida (strain A449).